Consider the following 131-residue polypeptide: Large ribosomal subunit protein bL12 (131 aa).

This sequence belongs to the bacterial ribosomal protein bL12 family. In terms of assembly, homodimer. Part of the ribosomal stalk of the 50S ribosomal subunit. Forms a multimeric L10(L12)X complex, where L10 forms an elongated spine to which 2 to 4 L12 dimers bind in a sequential fashion. Binds GTP-bound translation factors.

Its function is as follows. Forms part of the ribosomal stalk which helps the ribosome interact with GTP-bound translation factors. Is thus essential for accurate translation. The sequence is that of Large ribosomal subunit protein bL12 from Prochlorococcus marinus (strain MIT 9312).